Here is a 374-residue protein sequence, read N- to C-terminus: UDP-N-acetylglucosamine--N-acetylmuramyl-(pentapeptide) pyrophosphoryl-undecaprenol N-acetylglucosamine transferase (374 aa).

UDP-N-acetyl-alpha-D-glucosamine contacts are provided by residues 14-16 (TGG), N125, R168, S196, and Q297.

Belongs to the glycosyltransferase 28 family. MurG subfamily.

The protein resides in the cell inner membrane. The catalysed reaction is di-trans,octa-cis-undecaprenyl diphospho-N-acetyl-alpha-D-muramoyl-L-alanyl-D-glutamyl-meso-2,6-diaminopimeloyl-D-alanyl-D-alanine + UDP-N-acetyl-alpha-D-glucosamine = di-trans,octa-cis-undecaprenyl diphospho-[N-acetyl-alpha-D-glucosaminyl-(1-&gt;4)]-N-acetyl-alpha-D-muramoyl-L-alanyl-D-glutamyl-meso-2,6-diaminopimeloyl-D-alanyl-D-alanine + UDP + H(+). Its pathway is cell wall biogenesis; peptidoglycan biosynthesis. In terms of biological role, cell wall formation. Catalyzes the transfer of a GlcNAc subunit on undecaprenyl-pyrophosphoryl-MurNAc-pentapeptide (lipid intermediate I) to form undecaprenyl-pyrophosphoryl-MurNAc-(pentapeptide)GlcNAc (lipid intermediate II). The polypeptide is UDP-N-acetylglucosamine--N-acetylmuramyl-(pentapeptide) pyrophosphoryl-undecaprenol N-acetylglucosamine transferase (Rhodopseudomonas palustris (strain BisA53)).